Reading from the N-terminus, the 318-residue chain is Death effector domain-containing protein (318 aa).

One can recognise a DED domain in the interval 25–103 (SLHRMFDIVG…RHDLLPYVTL (79 aa)). Disordered regions lie at residues 128–147 (PRAL…TVPP) and 160–191 (QMCS…KEKQ).

In terms of assembly, interacts with CASP8, CASP10, KRT8, KRT18, CASP3 and FADD. Homodimerizes and heterodimerizes with DEDD2. In terms of processing, exists predominantly in a mono- or diubiquitinated form. Widely expressed with highest levels in testis.

The protein resides in the cytoplasm. The protein localises to the nucleus. Its subcellular location is the nucleolus. Its function is as follows. A scaffold protein that directs CASP3 to certain substrates and facilitates their ordered degradation during apoptosis. May also play a role in mediating CASP3 cleavage of KRT18. Regulates degradation of intermediate filaments during apoptosis. May play a role in the general transcription machinery in the nucleus and might be an important regulator of the activity of GTF3C3. Inhibits DNA transcription in vitro. This chain is Death effector domain-containing protein (DEDD), found in Homo sapiens (Human).